The primary structure comprises 513 residues: QWRF motif-containing protein 9 (513 aa).

3 stretches are compositionally biased toward polar residues: residues 1–26, 43–55, and 65–78; these read MTAA…PSES, GTSS…SPKR, and VTPS…PQST. 3 disordered regions span residues 1 to 89, 115 to 144, and 184 to 293; these read MTAA…RREV, GTLE…LSDQ, and VSNR…LRVR. Over residues 79–89 the composition is skewed to basic and acidic residues; sequence PRRESLDRREV. Composition is skewed to polar residues over residues 202–211 and 244–262; these read ESVSSGSSNG and VDSS…SPRG. Positions 334-337 match the QWRF motif motif; that stretch reads QWQF.

Belongs to the QWRF family.

The chain is QWRF motif-containing protein 9 (QWRF9) from Arabidopsis thaliana (Mouse-ear cress).